Consider the following 212-residue polypeptide: MAIGLVGRKCGMTRIFTDAGVSVPVTVIEVDPNRITQIKTLETDGYQAVQVTTGERRESRVTNAQKGHFAKAGVAAGRLVKEFRVTEAELEGREVGGTIGVDLFTVGQIVDVTGQSKGKGFQGGVKRWNFRTQDATHGNSVSHRVLGSTGQNQTPGRVFKGKKMAGHLGDERVTVQGLEIVSVDTERSVLVVKGAIPGATGGDVIVRPTIKA.

The segment at 136–155 (THGNSVSHRVLGSTGQNQTP) is disordered. Q153 bears the N5-methylglutamine mark.

This sequence belongs to the universal ribosomal protein uL3 family. Part of the 50S ribosomal subunit. Forms a cluster with proteins L14 and L19. Post-translationally, methylated by PrmB.

One of the primary rRNA binding proteins, it binds directly near the 3'-end of the 23S rRNA, where it nucleates assembly of the 50S subunit. This chain is Large ribosomal subunit protein uL3, found in Acinetobacter baumannii (strain AB307-0294).